Reading from the N-terminus, the 637-residue chain is Mitochondrial Rho GTPase 1 (637 aa).

The Cytoplasmic portion of the chain corresponds to 1-613 (MSDGETLADV…LRRVFYLSDS (613 aa)). The Miro 1 domain maps to 7 to 184 (LADVRIVLIG…FYYAQKAVIY (178 aa)). Residues 28–35 (SLLEDEWV), 74–78 (ISEMR), and 135–138 (LPSG) each bind GTP. EF-hand domains lie at 200 to 235 (RAKK…CFGI) and 320 to 355 (EGVQ…CSAP). Ca(2+) is bound by residues Asp213, Asp215, Asp217, Tyr219, Glu224, Asp333, Asp335, Asp337, Cys339, and Glu344. A Miro 2 domain is found at 436 to 601 (RKVFQCLVVG…FEQLAMMAVY (166 aa)). GTP-binding positions include 445–452 (GAKDAGKT), 482–486 (KVKEE), and 549–552 (TKVE). Residues 614–634 (NLLSKITFGAAIVALAGFLVL) traverse the membrane as a helical; Anchor for type IV membrane protein segment. Over 635 to 637 (KNL) the chain is Mitochondrial intermembrane.

This sequence belongs to the mitochondrial Rho GTPase family.

It is found in the mitochondrion outer membrane. Functionally, mitochondrial GTPase involved in mitochondrial trafficking. Probably involved in control of anterograde transport of mitochondria and their subcellular distribution. This chain is Mitochondrial Rho GTPase 1, found in Caenorhabditis briggsae.